The primary structure comprises 148 residues: D-aminoacyl-tRNA deacylase (148 aa).

The short motif at 137–138 (GP) is the Gly-cisPro motif, important for rejection of L-amino acids element.

It belongs to the DTD family. Homodimer.

The protein resides in the cytoplasm. The catalysed reaction is glycyl-tRNA(Ala) + H2O = tRNA(Ala) + glycine + H(+). It carries out the reaction a D-aminoacyl-tRNA + H2O = a tRNA + a D-alpha-amino acid + H(+). Its function is as follows. An aminoacyl-tRNA editing enzyme that deacylates mischarged D-aminoacyl-tRNAs. Also deacylates mischarged glycyl-tRNA(Ala), protecting cells against glycine mischarging by AlaRS. Acts via tRNA-based rather than protein-based catalysis; rejects L-amino acids rather than detecting D-amino acids in the active site. By recycling D-aminoacyl-tRNA to D-amino acids and free tRNA molecules, this enzyme counteracts the toxicity associated with the formation of D-aminoacyl-tRNA entities in vivo and helps enforce protein L-homochirality. This is D-aminoacyl-tRNA deacylase from Aquifex aeolicus (strain VF5).